Consider the following 359-residue polypeptide: Photosystem II protein D1 3 (359 aa).

The next 3 membrane-spanning stretches (helical) occupy residues 29–46, 118–133, and 142–156; these read YVGW…AATI, HFLI…EWEL, and WICV…AASA. H118 serves as a coordination point for chlorophyll a. Position 126 (Y126) interacts with pheophytin a. [CaMn4O5] cluster is bound by residues D170 and E189. A helical membrane pass occupies residues 197–218; the sequence is FHMLGVAGVFGGSLFSAMHGSL. Position 198 (H198) interacts with chlorophyll a. Residues H215 and 264–265 contribute to the a quinone site; that span reads SF. H215 is a binding site for Fe cation. Residue H272 coordinates Fe cation. Residues 274–288 traverse the membrane as a helical segment; sequence FLAAWPVVGIWFTAL. Residues H332, E333, D342, and A344 each coordinate [CaMn4O5] cluster. A propeptide spanning residues 345-359 is cleaved from the precursor; that stretch reads AAESTPVALQVPAIG.

Belongs to the reaction center PufL/M/PsbA/D family. As to quaternary structure, PSII is composed of 1 copy each of membrane proteins PsbA, PsbB, PsbC, PsbD, PsbE, PsbF, PsbH, PsbI, PsbJ, PsbK, PsbL, PsbM, PsbT, PsbX, PsbY, PsbZ, Psb30/Ycf12, peripheral proteins PsbO, CyanoQ (PsbQ), PsbU, PsbV and a large number of cofactors. It forms dimeric complexes. Requires The D1/D2 heterodimer binds P680, chlorophylls that are the primary electron donor of PSII, and subsequent electron acceptors. It shares a non-heme iron and each subunit binds pheophytin, quinone, additional chlorophylls, carotenoids and lipids. D1 provides most of the ligands for the Mn4-Ca-O5 cluster of the oxygen-evolving complex (OEC). There is also a Cl(-1) ion associated with D1 and D2, which is required for oxygen evolution. The PSII complex binds additional chlorophylls, carotenoids and specific lipids. as cofactor. Post-translationally, tyr-161 forms a radical intermediate that is referred to as redox-active TyrZ, YZ or Y-Z. C-terminally processed by CtpA; processing is essential to allow assembly of the oxygen-evolving complex and thus photosynthetic growth.

The protein resides in the cellular thylakoid membrane. The enzyme catalyses 2 a plastoquinone + 4 hnu + 2 H2O = 2 a plastoquinol + O2. Functionally, photosystem II (PSII) is a light-driven water:plastoquinone oxidoreductase that uses light energy to abstract electrons from H(2)O, generating O(2) and a proton gradient subsequently used for ATP formation. It consists of a core antenna complex that captures photons, and an electron transfer chain that converts photonic excitation into a charge separation. The D1/D2 (PsbA/PsbD) reaction center heterodimer binds P680, the primary electron donor of PSII as well as several subsequent electron acceptors. The sequence is that of Photosystem II protein D1 3 from Parasynechococcus marenigrum (strain WH8102).